The primary structure comprises 1139 residues: Dual 3',5'-cyclic-AMP and -GMP phosphodiesterase beta (1139 aa).

2 disordered regions span residues 1–42 (MGKV…NINK) and 154–177 (GISE…STSN). Residues 1–429 (MGKVEDFEEH…LNLNNWISSR (429 aa)) lie on the Cytoplasmic side of the membrane. The span at 9 to 22 (EHNKNSNQDIEKNV) shows a compositional bias: basic and acidic residues. Positions 29–42 (NSNTINDQNENINK) are enriched in polar residues. Residues 430–450 (MIIIGIVMLILSFIIWPLTTW) form a helical membrane-spanning segment. The Extracellular portion of the chain corresponds to 451-462 (SLKTSTWGRETY). The helical transmembrane segment at 463-483 (IIILFHTLMAINTLILIFFII) threads the bilayer. The Cytoplasmic segment spans residues 484-498 (IGSTELCKYSECMSY). The chain crosses the membrane as a helical span at residues 499–519 (VLFSLMVALWGLWNIAIGLTL). At 520–536 (EYNPNLSEMPTTTYELE) the chain is on the extracellular side. Asn524 carries an N-linked (GlcNAc...) asparagine glycan. The chain crosses the membrane as a helical span at residues 537–557 (MIYVLTYIYGFLPLVIIDIFF). Residues 558 to 564 (PSRTKYN) are Cytoplasmic-facing. A helical membrane pass occupies residues 565–585 (WIIHLIFIFLNSSSIILVGSA). Over 586–592 (KPDFVPE) the chain is Extracellular. Residues 593 to 613 (IYVVFRILAYTTLCIFLYIGS) form a helical membrane-spanning segment. Residues 614-1139 (YTSELQIRYV…TLFFIKNVSD (526 aa)) are Cytoplasmic-facing. Positions 775-1098 (INISQLTKMI…IMWDTLMKEE (324 aa)) constitute a PDEase domain. The active-site Proton donor is His847. 847–851 (HNTIH) is a binding site for a nucleoside 3',5'-cyclic phosphate. Positions 851, 887, 888, and 1000 each coordinate a divalent metal cation. A nucleoside 3',5'-cyclic phosphate is bound by residues Asp888, Asp1000, and Gln1052.

This sequence belongs to the cyclic nucleotide phosphodiesterase family. The cofactor is a divalent metal cation.

It localises to the cell membrane. The protein resides in the endoplasmic reticulum membrane. It carries out the reaction 3',5'-cyclic GMP + H2O = GMP + H(+). The catalysed reaction is 3',5'-cyclic AMP + H2O = AMP + H(+). Its pathway is purine metabolism; 3',5'-cyclic GMP degradation; GMP from 3',5'-cyclic GMP: step 1/1. It participates in purine metabolism; 3',5'-cyclic AMP degradation; AMP from 3',5'-cyclic AMP: step 1/1. In terms of biological role, plays a role in signal transduction by regulating the intracellular concentration of cyclic nucleotides cAMP and cGMP. Catalyzes the hydrolysis of both cAMP and cGMP to 5'-AMP and 5'-GMP, respectively. By regulating cAMP levels during the asexual blood stage and, thus PKA activation, required for merozoite invasion of erythrocytes and for the parasite development immediately following invasion. The protein is Dual 3',5'-cyclic-AMP and -GMP phosphodiesterase beta of Plasmodium falciparum (isolate 3D7).